The following is a 320-amino-acid chain: Protein MRH1 (320 aa).

Residues 1 to 34 (MSTFETLIKRGGNEAIKINPPTGADFHITSRGSD) lie on the Extracellular side of the membrane. The chain crosses the membrane as a helical span at residues 35 to 55 (WFWTCFCCYLLFGLILTFLMF). Residues 56-62 (RKPVNDR) are Cytoplasmic-facing. A helical transmembrane segment spans residues 63–83 (FFYLTGIAPNFFMCIAYFTMA). The Extracellular segment spans residues 84–116 (SNLGWIPVKAKYNHVQTSTQKEHPGYRQIFYSR). The chain crosses the membrane as a helical span at residues 117 to 137 (FVGWFLALPWPIIQICMLAGT). The Cytoplasmic segment spans residues 138 to 141 (PFWQ). A helical membrane pass occupies residues 142 to 162 (MAFNVCITEFFTVCWLIAACV). Over 163 to 167 (HSTYK) the chain is Extracellular. The helical transmembrane segment at 168 to 188 (WGYYTIGLGAAIVVSISVMTT) threads the bilayer. Over 189–204 (SYNLVKQRDNDIRLTF) the chain is Cytoplasmic. The chain crosses the membrane as a helical span at residues 205–225 (LVFFSIIMFLWIIAYPTCFGI). At 226 to 238 (TDGGNVLQPDSAG) the chain is on the extracellular side. The helical transmembrane segment at 239 to 259 (IFYGIIDLILMCFIPTLLVPI) threads the bilayer. Residues 260-320 (ANHFGADKLG…KSKKSKKSEE (61 aa)) are Cytoplasmic-facing. The segment at 285 to 320 (APVASPRPAATPNLSKDKKKKSKKSKKSKKSKKSEE) is disordered. Position 289 is a phosphoserine (S289). T295 is modified (phosphothreonine). S299 bears the Phosphoserine mark. Residues 301-320 (DKKKKSKKSKKSKKSKKSEE) show a composition bias toward basic residues.

It belongs to the archaeal/bacterial/fungal opsin family.

The protein resides in the cell membrane. Its subcellular location is the mitochondrion. It is found in the bud. The protein is Protein MRH1 (MRH1) of Saccharomyces cerevisiae (strain ATCC 204508 / S288c) (Baker's yeast).